Here is a 438-residue protein sequence, read N- to C-terminus: Coenzyme A disulfide reductase (438 aa).

8-33 serves as a coordination point for FAD; the sequence is GAVAGGATCASQIRRLDKESDIIIFE. Residues threonine 15, glutamine 19, arginine 22, serine 39, and asparagine 42 each contribute to the substrate site. The active-site Nucleophile is the cysteine 43. Residue cysteine 43 is the Redox-active of the active site. Lysine 71 lines the substrate pocket. 151-166 serves as a coordination point for NADP(+); it reads VLVVGAGYVSLEVLEN. 267–277 contacts FAD; it reads TNVPNIYAIGD. Histidine 299 serves as a coordination point for substrate. Residue tyrosine 419 coordinates FAD. Residue lysine 427 coordinates substrate.

This sequence belongs to the class-III pyridine nucleotide-disulfide oxidoreductase family. As to quaternary structure, homodimer. The cofactor is FAD.

The catalysed reaction is NADP(+) + 2 CoA = CoA-disulfide + NADPH + H(+). Functionally, catalyzes specifically the NADPH-dependent reduction of coenzyme A disulfide. Is also active with other disulfide substrates containing at least one 4'-phosphopantethienyl moiety such as 4,4'-diphosphopantethine, but is not able to reduce oxidized glutathione, cystine, pantethine, or H(2)O(2). The polypeptide is Coenzyme A disulfide reductase (cdr) (Staphylococcus aureus (strain NCTC 8325 / PS 47)).